The sequence spans 435 residues: MSQCFAVKGIGGADQATLGSAEILVKYAQLADKRARVYVLVSTWLVVWGIWHVYFVEAVFPNAILWLHYYAASYEFGFVRRGLGGELIRMLTGDHFFAGAYTVLWTSITVWLIALAVVVWLILSTGNRSERRIMLALLVPVLPFAFSYAIYNPHPELFGMTALVAFSIFLTRAHTSRTRVILSTLYGLTMAVLALIHEAIPLEFALGAVLAIIVLSKNATGATRRICTALAIGPGTVSVLLLAVVGRRDIADQLCAHIPHGMVENPWAVATTPQRVLDYIFGRVESHADYHDWVCEHVTPWFNLDWITSAKLVAVVGFRALFGAFLLGLLFFVATTSMIRYVSAVPVRTFFAELRGNLALPVLASALLVPLFITAVDWTRWWVMITLDVAIVYILYAIDRPEIEQPPSRRNVQVFVCVVLVLAVIPTGSANNIGR.

9 helical membrane-spanning segments follow: residues 40–60, 103–123, 133–153, 195–215, 226–246, 313–333, 358–378, 381–401, and 414–434; these read LVST…EAVF, VLWT…WLIL, IMLA…IYNP, LIHE…IIVL, ICTA…AVVG, VAVV…LFFV, LALP…AVDW, WWVM…IDRP, and VFVC…NNIG.

It localises to the cell membrane. This is an uncharacterized protein from Mycobacterium bovis (strain ATCC BAA-935 / AF2122/97).